Reading from the N-terminus, the 169-residue chain is Protein-export protein SecB (169 aa).

This sequence belongs to the SecB family. As to quaternary structure, homotetramer, a dimer of dimers. One homotetramer interacts with 1 SecA dimer.

It localises to the cytoplasm. Functionally, one of the proteins required for the normal export of preproteins out of the cell cytoplasm. It is a molecular chaperone that binds to a subset of precursor proteins, maintaining them in a translocation-competent state. It also specifically binds to its receptor SecA. The polypeptide is Protein-export protein SecB (Mannheimia succiniciproducens (strain KCTC 0769BP / MBEL55E)).